We begin with the raw amino-acid sequence, 198 residues long: Imidazoleglycerol-phosphate dehydratase (198 aa).

It belongs to the imidazoleglycerol-phosphate dehydratase family.

Its subcellular location is the cytoplasm. The enzyme catalyses D-erythro-1-(imidazol-4-yl)glycerol 3-phosphate = 3-(imidazol-4-yl)-2-oxopropyl phosphate + H2O. Its pathway is amino-acid biosynthesis; L-histidine biosynthesis; L-histidine from 5-phospho-alpha-D-ribose 1-diphosphate: step 6/9. The chain is Imidazoleglycerol-phosphate dehydratase from Janthinobacterium sp. (strain Marseille) (Minibacterium massiliensis).